A 223-amino-acid chain; its full sequence is DNA mismatch repair protein MutH (223 aa).

This sequence belongs to the MutH family.

It localises to the cytoplasm. Sequence-specific endonuclease that cleaves unmethylated GATC sequences. It is involved in DNA mismatch repair. In Shewanella baltica (strain OS185), this protein is DNA mismatch repair protein MutH.